A 246-amino-acid polypeptide reads, in one-letter code: DNA polymerase sliding clamp (246 aa).

It belongs to the PCNA family. In terms of assembly, homotrimer. The subunits circularize to form a toroid; DNA passes through its center. Replication factor C (RFC) is required to load the toroid on the DNA.

Its function is as follows. Sliding clamp subunit that acts as a moving platform for DNA processing. Responsible for tethering the catalytic subunit of DNA polymerase and other proteins to DNA during high-speed replication. This is DNA polymerase sliding clamp from Thermoplasma acidophilum (strain ATCC 25905 / DSM 1728 / JCM 9062 / NBRC 15155 / AMRC-C165).